The following is an 857-amino-acid chain: DNA mismatch repair protein MutS (857 aa).

608 to 615 (GPNMSGKS) contacts ATP.

The protein belongs to the DNA mismatch repair MutS family.

In terms of biological role, this protein is involved in the repair of mismatches in DNA. It is possible that it carries out the mismatch recognition step. This protein has a weak ATPase activity. The polypeptide is DNA mismatch repair protein MutS (Lacticaseibacillus casei (strain BL23) (Lactobacillus casei)).